The following is a 68-amino-acid chain: Conotoxin ba14a (68 aa).

Positions 1–20 are cleaved as a signal peptide; it reads MKLSVMFIVALVLSLSMTDG. Residues 21-50 constitute a propeptide that is removed on maturation; sequence LPRRAENGGRIFRQHSPDSMDPQTRQIKTR.

In terms of processing, contains 2 disulfide bonds. Expressed by the venom duct.

It localises to the secreted. This is Conotoxin ba14a from Conus bayani (Bayan's cone).